The chain runs to 330 residues: Phytanoyl-CoA hydroxylase-interacting protein (330 aa).

The region spanning 6-115 is the Fibronectin type-III domain; sequence TPHSIEINNI…ETVEFCTGDY (110 aa). N-linked (GlcNAc...) asparagine glycosylation is found at Asn-14 and Asn-325.

It belongs to the PHYHIP family. In terms of assembly, interacts with PHYH and ADGRB1. In terms of tissue distribution, highly expressed in the brain.

Its interaction with PHYH suggests a role in the development of the central system. This Homo sapiens (Human) protein is Phytanoyl-CoA hydroxylase-interacting protein (PHYHIP).